Reading from the N-terminus, the 107-residue chain is MQLSTTPNLEGFTITEYCGVVTGEAILGANIFRDFFASIRDVVGGRSGAYEKELRKARQIAFKELQEQAEDLGANAIVGIDLDYETVGKDGSMLMVTVSGTAVKVRR.

Belongs to the UPF0145 family.

In Pectobacterium atrosepticum (strain SCRI 1043 / ATCC BAA-672) (Erwinia carotovora subsp. atroseptica), this protein is UPF0145 protein ECA2666.